The chain runs to 349 residues: 3'-5' exoribonuclease 1 (349 aa).

Composition is skewed to basic and acidic residues over residues 1–10 (MEDPQSKEPA) and 22–35 (PRPE…RPSP). A disordered region spans residues 1–48 (MEDPQSKEPAGEAVALALLESPRPEGGEEPPRPSPEETQQCKFDGQET). Residues serine 59 and serine 62 each carry the phosphoserine modification. In terms of domain architecture, SAP spans 76-110 (INRMSKEELRAKLSEFKLETRGVKDVLKKRLKNYY). The 177-residue stretch at 130-306 (ICIIDFEATC…DDSKNIARIA (177 aa)) folds into the Exonuclease domain. Aspartate 134 and glutamate 136 together coordinate Mg(2+). The active-site Proton acceptor is glutamate 136. Residues glutamate 136 and alanine 137 each contribute to the AMP site. Aspartate 234 provides a ligand contact to Mg(2+). Histidine 293 serves as the catalytic Proton acceptor. An AMP-binding site is contributed by histidine 293. Aspartate 298 contributes to the Mg(2+) binding site.

Identified in a histone pre-mRNA complex, at least composed of ERI1, LSM11, SLBP, SNRPB, SYNCRIP and YBX1. Interacts in a cooperative manner with SLBP to the mature 3'-end of histone mRNAs. Binds to 40S and 60S ribosomal subunits and to 80S assembled ribosomes. Found in a ternary complex with SLBP and the stem-loop structure of the 3'-end of histone mRNAs. The cofactor is Mg(2+).

It localises to the cytoplasm. It is found in the nucleus. Its subcellular location is the nucleolus. The catalysed reaction is Exonucleolytic cleavage in the 3'- to 5'-direction to yield nucleoside 5'-phosphates.. Its activity is regulated as follows. Although it can bind simultaneously with SLBP to the 3'-end of histone mRNA, the presence of SLBP prevents the exonuclease activity. RNA exonuclease that binds to the 3'-end of histone mRNAs and degrades them, suggesting that it plays an essential role in histone mRNA decay after replication. A 2' and 3'-hydroxyl groups at the last nucleotide of the histone 3'-end is required for efficient 3'-end histone mRNA exonuclease activity and degradation of RNA substrates. Also able to degrade the 3'-overhangs of short interfering RNAs (siRNAs) in vitro, suggesting a possible role as regulator of RNA interference (RNAi). Required for binding the 5'-ACCCA-3' sequence present in stem-loop structure. Able to bind other mRNAs. Required for 5.8S rRNA 3'-end processing. Also binds to 5.8s ribosomal RNA. Binds with high affinity to the stem-loop structure of replication-dependent histone pre-mRNAs. In vitro, does not have sequence specificity. In vitro, has weak DNA exonuclease activity. In vitro, shows biphasic kinetics such that there is rapid hydrolysis of the last three unpaired RNA nucleotides in the 39 flanking sequence followed by a much slower cleavage through the stem that occurs over a longer incubation period in the order of hours. ERI1-mediated RNA metabolism plays a key role in chondrogenesis. This Homo sapiens (Human) protein is 3'-5' exoribonuclease 1.